We begin with the raw amino-acid sequence, 886 residues long: Alanine--tRNA ligase (886 aa).

Zn(2+)-binding residues include H564, H568, C666, and H670.

Belongs to the class-II aminoacyl-tRNA synthetase family. The cofactor is Zn(2+).

The protein localises to the cytoplasm. The enzyme catalyses tRNA(Ala) + L-alanine + ATP = L-alanyl-tRNA(Ala) + AMP + diphosphate. Its function is as follows. Catalyzes the attachment of alanine to tRNA(Ala) in a two-step reaction: alanine is first activated by ATP to form Ala-AMP and then transferred to the acceptor end of tRNA(Ala). Also edits incorrectly charged Ser-tRNA(Ala) and Gly-tRNA(Ala) via its editing domain. The sequence is that of Alanine--tRNA ligase from Prochlorococcus marinus subsp. pastoris (strain CCMP1986 / NIES-2087 / MED4).